A 904-amino-acid polypeptide reads, in one-letter code: Alanine--tRNA ligase (904 aa).

The Zn(2+) site is built by H584, H588, C687, and H691.

This sequence belongs to the class-II aminoacyl-tRNA synthetase family. Zn(2+) serves as cofactor.

Its subcellular location is the cytoplasm. The enzyme catalyses tRNA(Ala) + L-alanine + ATP = L-alanyl-tRNA(Ala) + AMP + diphosphate. Catalyzes the attachment of alanine to tRNA(Ala) in a two-step reaction: alanine is first activated by ATP to form Ala-AMP and then transferred to the acceptor end of tRNA(Ala). Also edits incorrectly charged Ser-tRNA(Ala) and Gly-tRNA(Ala) via its editing domain. The chain is Alanine--tRNA ligase from Mycobacterium tuberculosis (strain ATCC 25177 / H37Ra).